We begin with the raw amino-acid sequence, 83 residues long: Prolactin-releasing peptide (83 aa).

The first 21 residues, 1–21 (MALKTWLLCLLLLSLVLPGAS), serve as a signal peptide directing secretion. Phenylalanine 52 carries the post-translational modification Phenylalanine amide. A propeptide spanning residues 57–83 (ATPRDVTGLGQLSCLPLDGRTKFSQRG) is cleaved from the precursor.

Widely expressed, with highest levels in medulla oblongata and hypothalamus.

It localises to the secreted. Functionally, stimulates prolactin (PRL) release and regulates the expression of prolactin through its receptor GPR10. May stimulate lactotrophs directly to secrete PRL. The sequence is that of Prolactin-releasing peptide (Prlh) from Rattus norvegicus (Rat).